A 75-amino-acid chain; its full sequence is Small ribosomal subunit protein bS16c (75 aa).

It belongs to the bacterial ribosomal protein bS16 family.

The protein localises to the plastid. Its subcellular location is the chloroplast. The chain is Small ribosomal subunit protein bS16c from Cyanidioschyzon merolae (strain NIES-3377 / 10D) (Unicellular red alga).